The primary structure comprises 312 residues: Olfactory receptor 8G50 (312 aa).

Over Met1–Phe28 the chain is Extracellular. N-linked (GlcNAc...) asparagine glycosylation is present at Asn5. A helical transmembrane segment spans residues Leu29–Ile49. At Leu50–His56 the chain is on the cytoplasmic side. A helical membrane pass occupies residues Thr57–Ile77. At Thr78 to Thr99 the chain is on the extracellular side. A disulfide bond links Cys97 and Cys189. A helical transmembrane segment spans residues Gln100–Tyr120. The Cytoplasmic segment spans residues Asp121–Trp143. A helical transmembrane segment spans residues Met144–Leu164. Over Arg165–Ala204 the chain is Extracellular. The helical transmembrane segment at Phe205–Ile225 threads the bilayer. Residues Leu226 to His244 lie on the Cytoplasmic side of the membrane. Residues Phe245 to Val265 form a helical membrane-spanning segment. Residues Ser266 to Ser274 are Extracellular-facing. The chain crosses the membrane as a helical span at residues Ser275 to Leu292. The Cytoplasmic portion of the chain corresponds to Arg293–Val312.

It belongs to the G-protein coupled receptor 1 family.

The protein resides in the cell membrane. Its function is as follows. Odorant receptor. This Mus musculus (Mouse) protein is Olfactory receptor 8G50.